The sequence spans 207 residues: Peptidyl-tRNA hydrolase (207 aa).

TRNA is bound at residue Tyr-19. His-24 acts as the Proton acceptor in catalysis. Phe-70, Asn-72, and Asn-118 together coordinate tRNA.

It belongs to the PTH family. In terms of assembly, monomer.

The protein resides in the cytoplasm. The catalysed reaction is an N-acyl-L-alpha-aminoacyl-tRNA + H2O = an N-acyl-L-amino acid + a tRNA + H(+). Functionally, hydrolyzes ribosome-free peptidyl-tRNAs (with 1 or more amino acids incorporated), which drop off the ribosome during protein synthesis, or as a result of ribosome stalling. Catalyzes the release of premature peptidyl moieties from peptidyl-tRNA molecules trapped in stalled 50S ribosomal subunits, and thus maintains levels of free tRNAs and 50S ribosomes. The chain is Peptidyl-tRNA hydrolase from Synechococcus sp. (strain CC9311).